Here is a 482-residue protein sequence, read N- to C-terminus: Proton extrusion protein PxcA (482 aa).

4 consecutive transmembrane segments (helical) span residues 265–285 (FVLG…NLVI), 359–379 (PLKN…YFVL), 406–426 (IIIL…WEVI), and 442–462 (FINM…KYWI).

This sequence belongs to the CemA family.

The protein localises to the cell inner membrane. Functionally, required for H(+) efflux immediately after light irradiation to form a rapid H(+) concentration gradient across the thylakoid membranes. Together with PxcL, contributes to transient H(+) uptake following dark to light transition. This is Proton extrusion protein PxcA from Acaryochloris marina (strain MBIC 11017).